A 315-amino-acid polypeptide reads, in one-letter code: Homoserine kinase (315 aa).

ATP is bound at residue 97–107; the sequence is PPARGLGSSAT.

It belongs to the GHMP kinase family. Homoserine kinase subfamily.

The protein localises to the cytoplasm. The enzyme catalyses L-homoserine + ATP = O-phospho-L-homoserine + ADP + H(+). The protein operates within amino-acid biosynthesis; L-threonine biosynthesis; L-threonine from L-aspartate: step 4/5. Catalyzes the ATP-dependent phosphorylation of L-homoserine to L-homoserine phosphate. The protein is Homoserine kinase of Prochlorococcus marinus (strain NATL1A).